A 203-amino-acid polypeptide reads, in one-letter code: uncharacterized protein (203 aa).

2 disordered regions span residues 65-84 (LSLS…SFDS) and 92-170 (SSSS…ETAL). Acidic residues-rich tracts occupy residues 68–82 (SEDE…EDSF) and 98–110 (SEEE…EESL). A compositionally biased stretch (low complexity) spans 111–122 (DSSFLVSASLSL). Acidic residues predominate over residues 123–168 (SEDDEEEDSESEDEDEDEDSDSDSDSDSDSDEDEDEDEDSEEEEET). Residues 182–202 (TSFLLPFTLVVLAILFYPAWV) traverse the membrane as a helical segment.

Its subcellular location is the membrane. This is an uncharacterized protein from Saccharomyces cerevisiae (strain ATCC 204508 / S288c) (Baker's yeast).